A 266-amino-acid chain; its full sequence is Phosphatidylglycerol--prolipoprotein diacylglyceryl transferase (266 aa).

Helical transmembrane passes span 14–34, 55–75, 91–111, and 117–137; these read FGPL…AFFW, FLFY…ILFY, WKGG…MWLF, and VSMF…LFFG. Arginine 138 provides a ligand contact to a 1,2-diacyl-sn-glycero-3-phospho-(1'-sn-glycerol). The next 3 helical transmembrane spans lie at 172–192, 201–221, and 235–255; these read YPTQ…ILMF, GAAS…VEFF, and WVTM…ALVV.

This sequence belongs to the Lgt family.

Its subcellular location is the cell inner membrane. The enzyme catalyses L-cysteinyl-[prolipoprotein] + a 1,2-diacyl-sn-glycero-3-phospho-(1'-sn-glycerol) = an S-1,2-diacyl-sn-glyceryl-L-cysteinyl-[prolipoprotein] + sn-glycerol 1-phosphate + H(+). It participates in protein modification; lipoprotein biosynthesis (diacylglyceryl transfer). Functionally, catalyzes the transfer of the diacylglyceryl group from phosphatidylglycerol to the sulfhydryl group of the N-terminal cysteine of a prolipoprotein, the first step in the formation of mature lipoproteins. The protein is Phosphatidylglycerol--prolipoprotein diacylglyceryl transferase of Hydrogenovibrio crunogenus (strain DSM 25203 / XCL-2) (Thiomicrospira crunogena).